The primary structure comprises 345 residues: S-adenosylmethionine:tRNA ribosyltransferase-isomerase (345 aa).

Belongs to the QueA family. Monomer.

The protein localises to the cytoplasm. The catalysed reaction is 7-aminomethyl-7-carbaguanosine(34) in tRNA + S-adenosyl-L-methionine = epoxyqueuosine(34) in tRNA + adenine + L-methionine + 2 H(+). It participates in tRNA modification; tRNA-queuosine biosynthesis. Its function is as follows. Transfers and isomerizes the ribose moiety from AdoMet to the 7-aminomethyl group of 7-deazaguanine (preQ1-tRNA) to give epoxyqueuosine (oQ-tRNA). The chain is S-adenosylmethionine:tRNA ribosyltransferase-isomerase from Acinetobacter baumannii (strain ATCC 17978 / DSM 105126 / CIP 53.77 / LMG 1025 / NCDC KC755 / 5377).